The following is a 125-amino-acid chain: Large-conductance mechanosensitive channel (125 aa).

The next 3 membrane-spanning stretches (helical) occupy residues 19–39 (VGVI…KYII), 42–62 (FLGL…IGNA), and 66–86 (VGSF…VFLM).

The protein belongs to the MscL family. Homopentamer.

Its subcellular location is the cell membrane. Its function is as follows. Channel that opens in response to stretch forces in the membrane lipid bilayer. May participate in the regulation of osmotic pressure changes within the cell. This is Large-conductance mechanosensitive channel from Ligilactobacillus salivarius (strain UCC118) (Lactobacillus salivarius).